Reading from the N-terminus, the 121-residue chain is Small ribosomal subunit protein uS13 (121 aa).

A disordered region spans residues 91–121 (HRRGLPVRGQNTKNNARTRKGPRKTVANKKK). A compositionally biased stretch (basic residues) spans 106-121 (ARTRKGPRKTVANKKK).

It belongs to the universal ribosomal protein uS13 family. As to quaternary structure, part of the 30S ribosomal subunit. Forms a loose heterodimer with protein S19. Forms two bridges to the 50S subunit in the 70S ribosome.

Functionally, located at the top of the head of the 30S subunit, it contacts several helices of the 16S rRNA. In the 70S ribosome it contacts the 23S rRNA (bridge B1a) and protein L5 of the 50S subunit (bridge B1b), connecting the 2 subunits; these bridges are implicated in subunit movement. Contacts the tRNAs in the A and P-sites. This is Small ribosomal subunit protein uS13 from Lysinibacillus sphaericus (strain C3-41).